The chain runs to 499 residues: Low-affinity inorganic phosphate transporter PitA (499 aa).

Residues 1 to 4 (MLHL) lie on the Periplasmic side of the membrane. A helical transmembrane segment spans residues 5-25 (FAGLDLHTGLLLLLALAFVLF). Topologically, residues 26–51 (YEAINGFHDTANAVATVIYTRAMRSQ) are cytoplasmic. A helical transmembrane segment spans residues 52–72 (LAVVMAAVFNFLGVLLGGLSV). The Periplasmic segment spans residues 73–93 (AYAIVHMLPTDLLLNMGSSHG). The chain crosses the membrane as a helical span at residues 94–114 (LAMVFSMLLAAIIWNLGTWYF). Over 115-123 (GLPASSSHT) the chain is Cytoplasmic. A helical transmembrane segment spans residues 124-144 (LIGAIIGIGLTNALMTGTSVV). The Periplasmic portion of the chain corresponds to 145 to 154 (DALNIPKVLS). Residues 155–175 (IFGSLIVSPIVGLVFAGGLIF) form a helical membrane-spanning segment. Residues 176–206 (LLRRYWSGTKKRARIHLTPAEREKKDGKKKP) are Cytoplasmic-facing. A helical membrane pass occupies residues 207–227 (PFWTRIALILSAIGVAFSHGA). Residues 228-232 (NDGQK) lie on the Periplasmic side of the membrane. A helical transmembrane segment spans residues 233–253 (GIGLVMLVLIGVAPAGFVVNM). The Cytoplasmic segment spans residues 254-381 (NATGYEITRT…KSDMLSTIEY (128 aa)). The helical transmembrane segment at 382-402 (APVWIIMAVALALGIGTMIGW) threads the bilayer. Residues 403 to 429 (RRVATTIGEKIGKKGMTYAQGMSAQMT) lie on the Periplasmic side of the membrane. Residues 430-450 (AAVSIGLASYTGMPVSTTHVL) form a helical membrane-spanning segment. Residues 451–472 (SSSVAGTMVVDGGGLQRKTVTS) lie on the Cytoplasmic side of the membrane. A helical transmembrane segment spans residues 473–493 (ILMAWVFTLPAAVLLSGGLYW). Topologically, residues 494–499 (LSLQFL) are periplasmic.

It belongs to the inorganic phosphate transporter (PiT) (TC 2.A.20) family. Pit subfamily.

It is found in the cell inner membrane. It catalyses the reaction phosphate(in) + H(+)(in) = phosphate(out) + H(+)(out). Low-affinity inorganic phosphate transporter. The protein is Low-affinity inorganic phosphate transporter PitA (pitA) of Escherichia coli O157:H7.